The sequence spans 310 residues: ADP-L-glycero-D-manno-heptose-6-epimerase (310 aa).

NADP(+)-binding positions include 10 to 11, 31 to 32, lysine 38, lysine 53, 75 to 79, and asparagine 92; these read FI, DN, and EGACS. Catalysis depends on tyrosine 140, which acts as the Proton acceptor. NADP(+) is bound at residue lysine 144. A substrate-binding site is contributed by asparagine 169. 2 residues coordinate NADP(+): valine 170 and lysine 178. Catalysis depends on lysine 178, which acts as the Proton acceptor. Residues serine 180, histidine 187, 201–204, arginine 209, and tyrosine 272 each bind substrate; that span reads FEGS.

It belongs to the NAD(P)-dependent epimerase/dehydratase family. HldD subfamily. Homopentamer. NADP(+) serves as cofactor.

The catalysed reaction is ADP-D-glycero-beta-D-manno-heptose = ADP-L-glycero-beta-D-manno-heptose. Its pathway is nucleotide-sugar biosynthesis; ADP-L-glycero-beta-D-manno-heptose biosynthesis; ADP-L-glycero-beta-D-manno-heptose from D-glycero-beta-D-manno-heptose 7-phosphate: step 4/4. Functionally, catalyzes the interconversion between ADP-D-glycero-beta-D-manno-heptose and ADP-L-glycero-beta-D-manno-heptose via an epimerization at carbon 6 of the heptose. This is ADP-L-glycero-D-manno-heptose-6-epimerase from Salmonella newport (strain SL254).